The following is a 113-amino-acid chain: MQEARATTKYQRVSPYKVRLVIDQIRGMQVESAMNLLAFSKKRVAGVVRQTLKSAVANAEENLGLDVDTLVVSQAYVDQGPSMKRFKPRARGRATRILKRTSHITVAVCPQVD.

This sequence belongs to the universal ribosomal protein uL22 family. In terms of assembly, part of the 50S ribosomal subunit.

Functionally, this protein binds specifically to 23S rRNA; its binding is stimulated by other ribosomal proteins, e.g. L4, L17, and L20. It is important during the early stages of 50S assembly. It makes multiple contacts with different domains of the 23S rRNA in the assembled 50S subunit and ribosome. In terms of biological role, the globular domain of the protein is located near the polypeptide exit tunnel on the outside of the subunit, while an extended beta-hairpin is found that lines the wall of the exit tunnel in the center of the 70S ribosome. The chain is Large ribosomal subunit protein uL22 from Magnetococcus marinus (strain ATCC BAA-1437 / JCM 17883 / MC-1).